A 197-amino-acid polypeptide reads, in one-letter code: MANHLLEEMVDALSSLPGIGRKSAFRISFHLLRLEQGHFNHFIHQLTNTKNKIKFCKRCGSYAETEICNICTSEKRDTHTFCVVEQPEDIFFIENTREFHGKYHVLNGVISPLEGIGPKDLRIKELLERIEPEQIKEVLVATNPTLEGDATADYLASQLKPLSVDVTRIAYGITVGGSIELADQYTLGRAIRSRLQL.

Residues Cys-56 to Cys-71 form a C4-type zinc finger. One can recognise a Toprim domain in the interval His-79–Thr-174.

This sequence belongs to the RecR family.

In terms of biological role, may play a role in DNA repair. It seems to be involved in an RecBC-independent recombinational process of DNA repair. It may act with RecF and RecO. The chain is Recombination protein RecR from Leptospira borgpetersenii serovar Hardjo-bovis (strain JB197).